Reading from the N-terminus, the 156-residue chain is CD-NTase-associated protein 8 (156 aa).

The protein belongs to the bacterial HORMA family. HORMA3 subfamily. Interacts with Cap7 (also called HORMA2) and CdnC; forms CdnD:Cap7:Cap8 (also called CdnD:HORMA2:HORMA3) complexes with stoichiometries of 1:1:1 and 2:1:1.

Functionally, CBASS (cyclic oligonucleotide-based antiphage signaling system) provides immunity against bacteriophage. The CD-NTase protein synthesizes cyclic nucleotides in response to infection; these serve as specific second messenger signals. The signals activate a diverse range of effectors, leading to bacterial cell death and thus abortive phage infection. A type III-C(AAA) CBASS system. A member of the CBASS system in this bacteria. It does not seem to bind a closure peptide, its exact function is unknown. The chain is CD-NTase-associated protein 8 from Pseudomonas aeruginosa.